The primary structure comprises 833 residues: MGQKKKKLAKGRLDKFYYMAKEQGYRSRAAFKLIQLNKKYNFLGTAKACLDLCAAPGGWMQVASKYMPVQSLIVGVDLVPIRQVRNCIGLTEDITTQKCRTEIKKALKTWKVDVCLHDGAPNMGTSWVQDAYQQAELTLHALKLATEFLTTGGWFVTKVFRGSDYNSLIWVFNKLFKKVESTKPPSSRNASAEIFVVCQGFLNPKRIDPKLLDPKFVFKEIQEVKKVDVLSEKKKVNRAGYEDGVTVLYKKGFISDFVNSNEHLQDLANFNAFEFDEAAKIFEQHELTTPEIKELVKDLKVLNKNDFQKIIKWKKAMAAYKEKLDNPDEEETEKPEEKKELTAEEMEENLQEEMKEYLALVEKKKRKEKKRQNELKRKHQRKIELTMHIPGDKIEETTDGDLYSMKGKDEFDEDIVADHSDISSDEFDSDDSDDDDDDDNNGDSKLIDDDEYLEQQLDEQYKLYQQRIRKKAAKLDDVKVKKDKIGQDGYNEDDEEFVEEQEESNPLLVGNKRKEPDAQAVSSLFFDNELFGGVEYRNPGDSESEPEQDGDDDQDDENNKPIDISKLKKQKPQAAQPITKKQKTTNSAEFGKQKSKYQKNPTLDDKDDQDDDDDKGNSIKGFEEVPVQEEVEYESDSDEDIDDKIKTKALGEFLIRKKSRQDLIDDSFNKYAFNDTGLPNWFTDDENRHNKAQTPLTKEMVDEIRRKIKEIDDRPIKKIAEAKARKKYRLGKKMEKTRDKASSIVDNPEMSNREKSKAIEKLYSGTDKKNMKPKKIIMIAKKSKTAGGGTGKYKIVDKRMKKDLRAQKNKLKTVGRSKDSSKKSKPSGGKNKK.

Gly57, Trp59, Asp77, Asp93, and Asp118 together coordinate S-adenosyl-L-methionine. The Proton acceptor role is filled by Lys158. Disordered stretches follow at residues 323-349 (KLDN…MEEN), 363-453 (KKKR…DEYL), 475-640 (LDDV…SDED), 730-767 (LGKK…SGTD), and 779-833 (IAKK…KNKK). Residues 336 to 386 (EEKKELTAEEMEENLQEEMKEYLALVEKKKRKEKKRQNELKRKHQRKIELT) adopt a coiled-coil conformation. Basic residues predominate over residues 363–381 (KKKRKEKKRQNELKRKHQR). Over residues 382 to 396 (KIELTMHIPGDKIEE) the composition is skewed to basic and acidic residues. The segment covering 423-441 (SSDEFDSDDSDDDDDDDNN) has biased composition (acidic residues). The stretch at 455–485 (QQLDEQYKLYQQRIRKKAAKLDDVKVKKDKI) forms a coiled coil. Positions 475-486 (LDDVKVKKDKIG) are enriched in basic and acidic residues. Acidic residues-rich tracts occupy residues 490-503 (YNED…EQEE) and 542-556 (SESE…DQDD). The span at 557–566 (ENNKPIDISK) shows a compositional bias: basic and acidic residues. Acidic residues-rich tracts occupy residues 605–614 (DKDDQDDDDD) and 626–640 (PVQE…SDED). Basic and acidic residues-rich tracts occupy residues 732-741 (KKMEKTRDKA), 751-767 (SNRE…SGTD), and 794-806 (KIVD…DLRA).

This sequence belongs to the class I-like SAM-binding methyltransferase superfamily. RNA methyltransferase RlmE family. SPB1 subfamily.

The protein resides in the nucleus. It is found in the nucleolus. It catalyses the reaction a ribonucleotide in rRNA + S-adenosyl-L-methionine = a 2'-O-methylribonucleotide in rRNA + S-adenosyl-L-homocysteine + H(+). In terms of biological role, RNA 2'-O-methyltransferase involved in the maturation of rRNA and in the biogenesis of ribosomal subunits. This is pre-rRNA 2'-O-ribose RNA methyltransferase (fsjC) from Dictyostelium discoideum (Social amoeba).